The primary structure comprises 54 residues: Large ribosomal subunit protein bL32 (54 aa).

Residues M1 to E24 form a disordered region. Residues K7–R16 are compositionally biased toward basic residues.

The protein belongs to the bacterial ribosomal protein bL32 family.

This Buchnera aphidicola subsp. Schizaphis graminum (strain Sg) protein is Large ribosomal subunit protein bL32.